A 210-amino-acid chain; its full sequence is Uracil phosphoribosyltransferase (210 aa).

Residues Arg-80, Arg-105, and 132-140 (DPMLATGGS) each bind 5-phospho-alpha-D-ribose 1-diphosphate. Uracil is bound by residues Ile-195 and 200–202 (GDA). Asp-201 serves as a coordination point for 5-phospho-alpha-D-ribose 1-diphosphate.

This sequence belongs to the UPRTase family. It depends on Mg(2+) as a cofactor.

The catalysed reaction is UMP + diphosphate = 5-phospho-alpha-D-ribose 1-diphosphate + uracil. It functions in the pathway pyrimidine metabolism; UMP biosynthesis via salvage pathway; UMP from uracil: step 1/1. Its activity is regulated as follows. Allosterically activated by GTP. Its function is as follows. Catalyzes the conversion of uracil and 5-phospho-alpha-D-ribose 1-diphosphate (PRPP) to UMP and diphosphate. The chain is Uracil phosphoribosyltransferase from Deinococcus radiodurans (strain ATCC 13939 / DSM 20539 / JCM 16871 / CCUG 27074 / LMG 4051 / NBRC 15346 / NCIMB 9279 / VKM B-1422 / R1).